A 1537-amino-acid chain; its full sequence is Dicer-like protein 1 (1537 aa).

The segment at 38 to 68 (SDPAESSVDVQDEHSSDDSDNENEVFPKQND) is disordered. One can recognise a Helicase ATP-binding domain in the interval 133 to 314 (LFERAKTQNT…EAATRLETFL (182 aa)). Residue 146 to 153 (LDTGSGKT) participates in ATP binding. The short motif at 259-262 (DEAH) is the DEAH box element. Positions 459 to 618 (ELSKHFNDTT…EILPEDRILH (160 aa)) constitute a Helicase C-terminal domain. The region spanning 651-741 (AIAILARYAS…NSIYHRRLPA (91 aa)) is the Dicer dsRNA-binding fold domain. In terms of domain architecture, PAZ spans 891 to 1019 (DTVSFVHNND…ICAEPLRISA (129 aa)). RNase III domains follow at residues 1043-1202 (IALE…LSGG) and 1253-1405 (ARHV…VDSK). Mg(2+)-binding residues include Glu-1294, Asp-1391, and Glu-1394. Residues 1439–1507 (TFLHNKLTNE…SEKALAVLDG (69 aa)) form the DRBM domain. Positions 1451, 1478, 1519, and 1521 each coordinate Zn(2+).

Belongs to the helicase family. Dicer subfamily. Mg(2+) is required as a cofactor. Requires Mn(2+) as cofactor.

In terms of biological role, dicer-like endonuclease involved in cleaving double-stranded RNA in the RNA interference (RNAi) pathway. Produces 21 to 25 bp dsRNAs (siRNAs) which target the selective destruction of homologous RNAs leading to sequence-specific suppression of gene expression, called post-transcriptional gene silencing (PTGS). Part of a broad host defense response against viral infection and transposons. The sequence is that of Dicer-like protein 1 (dcl1) from Aspergillus fumigatus (strain ATCC MYA-4609 / CBS 101355 / FGSC A1100 / Af293) (Neosartorya fumigata).